A 148-amino-acid chain; its full sequence is Small ribosomal subunit protein bS6 (148 aa).

The interval 96–148 (HEEGQSAMLTRRDDRRERDGDDRPRRREGGFDRGDRGDRSPRRPRDNEAGEGA) is disordered.

Belongs to the bacterial ribosomal protein bS6 family.

Its function is as follows. Binds together with bS18 to 16S ribosomal RNA. The protein is Small ribosomal subunit protein bS6 of Brucella suis (strain ATCC 23445 / NCTC 10510).